The sequence spans 208 residues: 3-demethoxyubiquinol 3-hydroxylase (208 aa).

Residues E57, E87, H90, E139, E171, and H174 each coordinate Fe cation.

The protein belongs to the COQ7 family. The cofactor is Fe cation.

It localises to the cell membrane. It catalyses the reaction a 5-methoxy-2-methyl-3-(all-trans-polyprenyl)benzene-1,4-diol + AH2 + O2 = a 3-demethylubiquinol + A + H2O. The protein operates within cofactor biosynthesis; ubiquinone biosynthesis. Its function is as follows. Catalyzes the hydroxylation of 2-nonaprenyl-3-methyl-6-methoxy-1,4-benzoquinol during ubiquinone biosynthesis. In Burkholderia pseudomallei (strain 668), this protein is 3-demethoxyubiquinol 3-hydroxylase.